A 5068-amino-acid chain; its full sequence is Protein piccolo (5068 aa).

The segment covering Met1–Ala20 has biased composition (low complexity). Disordered stretches follow at residues Met1 to Glu143 and Phe173 to Ala524. Residues Pro93 to Pro102 show a composition bias toward pro residues. Basic and acidic residues-rich tracts occupy residues Arg111–Leu122, Lys133–Glu143, and Glu185–Lys199. Ser212 bears the Phosphoserine mark. Over residues Pro232–Ala241 the composition is skewed to polar residues. Residues Ala252 to Ala279 are compositionally biased toward low complexity. Residues Thr319 to Gly334 are compositionally biased toward polar residues. Composition is skewed to pro residues over residues Pro391–Gln407 and Pro416–Gln487. The 10 X 10 AA tandem approximate repeats of P-A-K-P-Q-P-Q-Q-P-X stretch occupies residues Pro401 to Ser500. Residues Ser495–Thr508 show a composition bias toward polar residues. Over residues Pro515–Ala524 the composition is skewed to low complexity. Residues Cys532–Cys556 form a C4-type zinc finger. 4 disordered regions span residues Ala594–Gly867, Leu883–Asn1005, Leu1057–Leu1345, and Val1364–Glu1803. A compositionally biased stretch (polar residues) spans Gln610 to Ser625. Residues Pro626–Lys644 are compositionally biased toward basic and acidic residues. Residues Ser709–Leu738 are compositionally biased toward low complexity. Basic and acidic residues predominate over residues Glu782–Lys795. The span at Val809–Ser830 shows a compositional bias: low complexity. Phosphoserine is present on residues Ser844 and Ser856. Polar residues-rich tracts occupy residues Ser856 to Val865 and Leu883 to His893. Thr860 carries the phosphothreonine modification. The segment at Cys997–Cys1020 adopts a C4-type zinc-finger fold. The segment covering Ser1073 to Lys1085 has biased composition (pro residues). The span at Lys1097–Ser1116 shows a compositional bias: basic and acidic residues. At Thr1120 the chain carries Phosphothreonine. Composition is skewed to basic and acidic residues over residues Pro1144–Pro1165, Leu1172–Pro1186, Pro1244–Asp1253, and Thr1262–Asp1283. A compositionally biased stretch (polar residues) spans Pro1290–Ile1306. Ser1292, Ser1302, Ser1303, Ser1332, Ser1334, Ser1337, Ser1338, and Ser1341 each carry phosphoserine. Residues Ser1319–Phe1333 are compositionally biased toward basic and acidic residues. Over residues Ser1334 to Ser1343 the composition is skewed to low complexity. Residues Pro1374–Ser1392 are compositionally biased toward polar residues. Over residues Lys1405–Ser1444 the composition is skewed to basic and acidic residues. Residues Ser1439, Ser1451, Ser1452, Ser1454, Ser1457, Ser1481, Ser1484, Ser1505, and Ser1507 each carry the phosphoserine modification. The segment covering Ser1499 to Glu1511 has biased composition (acidic residues). Thr1552 carries the post-translational modification Phosphothreonine. 3 positions are modified to phosphoserine: Ser1553, Ser1563, and Ser1575. Over residues Asp1566–Ser1575 the composition is skewed to acidic residues. Positions Pro1576–Glu1587 are enriched in basic and acidic residues. Over residues Glu1606–Thr1624 the composition is skewed to polar residues. Over residues Phe1628–Ser1638 the composition is skewed to acidic residues. Position 1638 is a phosphoserine (Ser1638). Thr1640 bears the Phosphothreonine mark. Ser1642 and Ser1647 each carry phosphoserine. Positions Glu1650 to Thr1667 are enriched in polar residues. Positions Asp1707–Leu1720 are enriched in acidic residues. Ser1708 and Ser1709 each carry phosphoserine. Over residues Leu1721–Gln1734 the composition is skewed to basic and acidic residues. Thr1760 bears the Phosphothreonine mark. Ser1766 bears the Phosphoserine mark. A compositionally biased stretch (basic and acidic residues) spans Glu1775–Ser1790. Ser1795, Ser1800, Ser1808, and Ser1829 each carry phosphoserine. Disordered regions lie at residues Pro2104–Val2126 and Glu2261–Ala2377. The segment covering Thr2109–Val2126 has biased composition (low complexity). Over residues Thr2277–Ser2291 the composition is skewed to polar residues. Residues Gln2334–Tyr2368 are compositionally biased toward pro residues. At Ser2495 the chain carries Phosphoserine. O-linked (GlcNAc) threonine glycosylation is present at Thr2686. Ser2960 carries O-linked (GlcNAc) serine glycosylation. Phosphothreonine is present on Thr2998. Disordered stretches follow at residues Lys3334 to Ser3443 and Lys3490 to Pro3556. At Ser3358 the chain carries Phosphoserine. Residues Asp3361 to Val3370 show a composition bias toward basic and acidic residues. Phosphoserine is present on Ser3372. Residues Thr3376 and Thr3403 each carry the phosphothreonine modification. Over residues Thr3403–Asp3412 the composition is skewed to acidic residues. The segment covering Gly3495 to Pro3507 has biased composition (polar residues). A phosphoserine mark is found at Ser3506, Ser3514, Ser3545, Ser3549, Ser3555, Ser3558, Ser3561, Ser3582, Ser3608, Ser3610, and Ser3616. Disordered regions lie at residues Pro3576–Met3679 and Asp3760–Pro3797. 2 stretches are compositionally biased toward polar residues: residues Lys3636–Gln3645 and Ser3661–Thr3673. At Ser3763 the chain carries Phosphoserine. The segment covering Ser3773–Arg3785 has biased composition (basic and acidic residues). Polar residues predominate over residues Ala3787–Pro3797. 3 positions are modified to phosphoserine: Ser4016, Ser4042, and Ser4132. Disordered regions lie at residues Ala4207–Leu4231 and Val4254–Ser4273. The segment covering Pro4210–Leu4231 has biased composition (low complexity). A compositionally biased stretch (polar residues) spans Gly4257–Ser4273. A phosphoserine mark is found at Ser4286, Ser4290, Ser4293, Ser4322, and Ser4358. The interval Arg4317–Thr4339 is disordered. Positions Arg4424–Leu4518 constitute a PDZ domain. A disordered region spans residues Lys4574 to His4620. Positions Ala4578–Val4601 are enriched in low complexity. A Phosphoserine modification is found at Ser4592. The C2 1 domain occupies Ile4622 to Tyr4751. The Ca(2+) site is built by Asp4651 and Asp4657. Residue Ser4706 is modified to Phosphoserine. Residues Asp4721, Asp4723, Ser4726, and Asp4729 each coordinate Ca(2+). Disordered stretches follow at residues Glu4758 to Gln4834 and Gln4857 to Ser4891. Composition is skewed to low complexity over residues His4766–Ser4778 and Ser4805–Glu4815. A compositionally biased stretch (polar residues) spans Pro4823–Gln4834. Low complexity predominate over residues Ser4870–Ser4891. Positions Val4933–His5058 constitute a C2 2 domain.

In terms of assembly, interacts with BSN, ERC2/CAST1, RIMS1 and UNC13A. Interacts (via C-terminus) with TRIO (via N-terminus). Interacts with CTBP1. Interacts with SIAH1; this interaction negatively regulates SIAH1 E3 ligase activity. Directly interacts with GIT1 and GIT2. The cofactor is Ca(2+). Highly expressed in brain. Moderately expressed in pituitary gland and pancreatic islets. Low levels found in stomach.

It is found in the presynaptic active zone. In terms of biological role, scaffold protein of the presynaptic cytomatrix at the active zone (CAZ) which is the place in the synapse where neurotransmitter is released. After synthesis, participates in the formation of Golgi-derived membranous organelles termed Piccolo-Bassoon transport vesicles (PTVs) that are transported along axons to sites of nascent synaptic contacts. At the presynaptic active zone, regulates the spatial organization of synaptic vesicle cluster, the protein complexes that execute membrane fusion and compensatory endocytosis. Organizes as well the readily releasable pool of synaptic vesicles and safeguards a fraction of them to be not immediately available for action potential-induced release. Also functions in processes other than assembly such as the regulation of specific presynaptic protein ubiquitination by interacting with SIAH1 or the regulation of presynaptic autophagy. Also mediates synapse to nucleus communication leading to reconfiguration of gene expression by associating with the transcriptional corepressor CTBP1 and by subsequently reducing the size of its pool available for nuclear import. The sequence is that of Protein piccolo from Mus musculus (Mouse).